We begin with the raw amino-acid sequence, 262 residues long: Thiazole synthase (262 aa).

Catalysis depends on Lys96, which acts as the Schiff-base intermediate with DXP. 1-deoxy-D-xylulose 5-phosphate contacts are provided by residues Gly157, 184–185 (AG), and 206–207 (NT).

Belongs to the ThiG family. In terms of assembly, homotetramer. Forms heterodimers with either ThiH or ThiS.

The protein localises to the cytoplasm. It carries out the reaction [ThiS sulfur-carrier protein]-C-terminal-Gly-aminoethanethioate + 2-iminoacetate + 1-deoxy-D-xylulose 5-phosphate = [ThiS sulfur-carrier protein]-C-terminal Gly-Gly + 2-[(2R,5Z)-2-carboxy-4-methylthiazol-5(2H)-ylidene]ethyl phosphate + 2 H2O + H(+). It participates in cofactor biosynthesis; thiamine diphosphate biosynthesis. Functionally, catalyzes the rearrangement of 1-deoxy-D-xylulose 5-phosphate (DXP) to produce the thiazole phosphate moiety of thiamine. Sulfur is provided by the thiocarboxylate moiety of the carrier protein ThiS. In vitro, sulfur can be provided by H(2)S. This Legionella pneumophila (strain Lens) protein is Thiazole synthase.